We begin with the raw amino-acid sequence, 2376 residues long: MESPGRKVLYEIRHHASLPYVPRYPPLPQADGTNSKGGLRSLVSIKGVSQLKEKWSEYWNPKKTNKPVSLFISPRGELVAVTSGNHVTILRKDDDYRKPCGNFTSSISGSFTSGVWSEKHDVLGLVDDSETLFFIRANGEEISQVTKRNLKVSAPVLGLMEDDSDLQPSCLCSFSILTSDGRIHHVEISREPSASAFSKHASNSVSKQFPNHVFCFDYHPDLSFLLIVGSVAGISSSGSSGSSCISLWRKCQNLGLELLSTTKFDGVYCENKDDQLAYPKTLISPQGSHVASLDSNGCVHIFQLDKARLTLSCCPSEDSSDSLKPDKSLQSWKESLRNVVDFTWWSDHALAILKRSGNISIFDISRCVIVQEDATIYSMPVVERVQKYEGHIFLLESSTQEAKSALANVDRDASEFHHTSEHSMLWRLISFTEKTIPEMYKILVEKCQYQEALDFSDSHGLDRDEVFKSRWLKSEKGVSDVSTILSKIKDKAFVLSECLDRIGPTEDSMKALLAHGLYLTNHYVFAKSEDQESQQLWEFRLARLRLLQFSERLDTYLGISMGRYSVQDYRKFRSNPINQAAISLAESGRIGALNLLFKRHPYSLVSFMLQILAAIPETVPVETYAHLLPGKSPPTSMAVREEDWVECEKMVKFINNLPENGKNDSLIQTEPIVRRCLGYNWPSSEELAAWYKSRARDIDSTTGLLDNCICLIDIACRKGISELEQFHEDLSYLHQIIYSDEIGGEICFSLSLAGWEHLSDYEKFKIMLEGVKADTVVRRLHEKAIPFMQKRFLGTNNQNVESFLVKWLKEMAAKSDMDLCSKVIDEGCIDLYTVCFFKDDVEAVDCALQCLYLCKVTDKWNVMATMLSKLPKINDKAGEDIQRRLKRAEGHIEAGRLLEFYQVPKPINYFLEVHLDEKGVKQILRLMLSKFVRRQPGRSDNDWACMWRDLRQLQEKAFYFLDLEFVLTEFCRGLLKAGKFSLARNYLKGTGSVALPSEKAESLVINAAKEYFFSAPSLASEEIWKARECLNIFSSSRTVKAEDDIIDAVTVRLPKLGVSLLPVQFKQVKDPMEIIKMAITGDPEAYLHGEELIEVAKLLGLNSSEDISSVKEAIAREAAIAGDMQLAFDLCLVLTKEGHGPIWDLGAAIARSPALEHMDISSRKQLLGFALGHCDDESISELLHAWKDFDLQGQCETLGMLSESNSPEFQKMDGVSCLTDFPQMLDGLSSDQQLDLDRAKDSISCVAKDMPVDDSVDLESLLKENGKLFSFAASHLPWLLKLGRNRKLDKSLVLDSIPGKQFVSIKATALITILSWLAKNGFAPKDELIAMITDSIIEHPVTKEEDVIGCSFLLNLVDASNAVEVIEKQLRIRGNYQEIRSIMSLGMIYSLLHDSGVECTAPIQRRELLQKNFERKQTESLADDMSKIDKLQSTFWKEWKHKLEEKMHDADRSRMLERIIPGVETERFLSHDIEYIKVAVFSLIESVKSEKKLILKDVLKLADTYGLKQSEVILRYLSSILCSEIWTNEDITAEILQVKEEILTFASDTIETISTIVYPAASGLNKQRLAYIYSLLSECYCHLAESKEASLLVQPNSSFAGLSNWYNVLKQECSRVSFIKDLDFKNISELGGLNFDSFNNEVHAHINEMNLEALAKMVETLSGLSMENSSKGLISCQDVYKQYIMNLLDTLESRRDLDFGSAESFQGFLGQLEKTYDHCRVYVRILEPLQAVEILKRHFTLVLPPNGSYMHIPDSSTWQECLILLINFWIRLADEMQEVKSSNPSLVENLTLSPECISSCFTLLIKLVMYDSLSPSQAWAAILVYLRSGLVGDCATEIFNFCRAMVFSGCGFGPISDVFSDMSSRYPTALQDLPHLYLSVLEPILQDLVSGAPETQNLYRLLSSLSNLEGNLEELKRVRLVVWKQLVIFSENLELPSQVRVYSLELMQFISGKNIKGSSSELQSNVMPWDGSAELLSSMQKTEAALNQALPDQADGSSRLTNTLVALKSSQVAVAAISPGLEISPEDLSTVETSVSCFSKLSAAVTTASQAEALLAILEGWEELFEAKNAELLPSNEATDQGNDWGDDDWNDGWETLQESEPVEKVKKECVVSAHPLHSCWLDIFRKYIALSMPENVLQLIDGSLQKPEEVIIEETEAESLTGILARTDPFLALKISLLLPYKQIRSQCLSVVEEQLKQEGIPELSSQSHHEVLLLVIYSGTLSTIISNACYGSVFSFLCYLIGKLSREFQEERITQADNRESNASSESRFISCFGQLMFPCFVSGLVKADQQILAGFLVTKFMHSNPSLSLINVAEASLRRYLDKQLESLEHLEDSFAESSDFETLKNTVSSLRGTSKEVIRSALASLSNCTNSR.

As to quaternary structure, forms a complex with MAG2, ZW10/MIP1 and MIP3 on the endoplasmic reticulum.

The protein localises to the endoplasmic reticulum membrane. Its function is as follows. Required for proper maturation of seed storage proteins. Forms a complex with MAG2, ZW10/MIP1 and MIP3 on the endoplasmic reticulum that may be responsible for efficient transport of seed storage proteins. In Arabidopsis thaliana (Mouse-ear cress), this protein is MAG2-interacting protein 2.